We begin with the raw amino-acid sequence, 139 residues long: Small ribosomal subunit protein uS12 (139 aa).

D102 carries the post-translational modification 3-methylthioaspartic acid.

It belongs to the universal ribosomal protein uS12 family. In terms of assembly, part of the 30S ribosomal subunit. Contacts proteins S8 and S17. May interact with IF1 in the 30S initiation complex.

Functionally, with S4 and S5 plays an important role in translational accuracy. In terms of biological role, interacts with and stabilizes bases of the 16S rRNA that are involved in tRNA selection in the A site and with the mRNA backbone. Located at the interface of the 30S and 50S subunits, it traverses the body of the 30S subunit contacting proteins on the other side and probably holding the rRNA structure together. The combined cluster of proteins S8, S12 and S17 appears to hold together the shoulder and platform of the 30S subunit. In Phytoplasma australiense, this protein is Small ribosomal subunit protein uS12.